A 204-amino-acid chain; its full sequence is dCTP deaminase, dUMP-forming (204 aa).

Residues 117–122 (RSSLGR), histidine 128, glycine 132, aspartate 135, 143–145 (TLE), glutamine 163, tyrosine 177, lysine 184, and glutamine 188 contribute to the dCTP site. Glutamate 145 acts as the Proton donor/acceptor in catalysis.

As to quaternary structure, homotrimer. Two trimers assemble into a hexamer by stacking on top of each other. Mg(2+) is required as a cofactor.

The enzyme catalyses dCTP + 2 H2O = dUMP + NH4(+) + diphosphate. It functions in the pathway pyrimidine metabolism; dUMP biosynthesis; dUMP from dCTP: step 1/1. Inhibited by dTTP. Functionally, bifunctional enzyme that catalyzes both the deamination of dCTP to dUTP and the hydrolysis of dUTP to dUMP without releasing the toxic dUTP intermediate. It also acts as a dUTP diphosphatase with a lower affinity for dUTP than for dCTP. The polypeptide is dCTP deaminase, dUMP-forming (Methanocaldococcus jannaschii (strain ATCC 43067 / DSM 2661 / JAL-1 / JCM 10045 / NBRC 100440) (Methanococcus jannaschii)).